Reading from the N-terminus, the 297-residue chain is Formamidopyrimidine-DNA glycosylase (297 aa).

The active-site Schiff-base intermediate with DNA is Pro-2. Glu-3 functions as the Proton donor in the catalytic mechanism. Catalysis depends on Lys-58, which acts as the Proton donor; for beta-elimination activity. DNA-binding residues include His-106, Arg-125, and Arg-168. An FPG-type zinc finger spans residues 259-295 (RVYDREGLACTARGCRGRVRRIVQAGRSTFYCETCQP). The Proton donor; for delta-elimination activity role is filled by Arg-285.

This sequence belongs to the FPG family. In terms of assembly, monomer. It depends on Zn(2+) as a cofactor.

It catalyses the reaction Hydrolysis of DNA containing ring-opened 7-methylguanine residues, releasing 2,6-diamino-4-hydroxy-5-(N-methyl)formamidopyrimidine.. The enzyme catalyses 2'-deoxyribonucleotide-(2'-deoxyribose 5'-phosphate)-2'-deoxyribonucleotide-DNA = a 3'-end 2'-deoxyribonucleotide-(2,3-dehydro-2,3-deoxyribose 5'-phosphate)-DNA + a 5'-end 5'-phospho-2'-deoxyribonucleoside-DNA + H(+). In terms of biological role, involved in base excision repair of DNA damaged by oxidation or by mutagenic agents. Acts as a DNA glycosylase that recognizes and removes damaged bases. Has a preference for oxidized purines, such as 7,8-dihydro-8-oxoguanine (8-oxoG). Has AP (apurinic/apyrimidinic) lyase activity and introduces nicks in the DNA strand. Cleaves the DNA backbone by beta-delta elimination to generate a single-strand break at the site of the removed base with both 3'- and 5'-phosphates. This Methylobacterium sp. (strain 4-46) protein is Formamidopyrimidine-DNA glycosylase.